A 360-amino-acid polypeptide reads, in one-letter code: Putative agmatine deiminase (360 aa).

Cys-353 serves as the catalytic Amidino-cysteine intermediate.

Belongs to the agmatine deiminase family.

The enzyme catalyses agmatine + H2O = N-carbamoylputrescine + NH4(+). The polypeptide is Putative agmatine deiminase (Vibrio parahaemolyticus serotype O3:K6 (strain RIMD 2210633)).